Here is a 68-residue protein sequence, read N- to C-terminus: Large ribosomal subunit protein bL32 (68 aa).

The protein belongs to the bacterial ribosomal protein bL32 family.

The chain is Large ribosomal subunit protein bL32 from Orientia tsutsugamushi (strain Ikeda) (Rickettsia tsutsugamushi).